Consider the following 562-residue polypeptide: 3-hydroxy-3-methylglutaryl-coenzyme A reductase 2 (562 aa).

The next 2 membrane-spanning stretches (helical) occupy residues 32–56 and 77–100; these read ALPL…YFLL and ICAL…DLIF. The segment at 101–146 is linker; sequence RSSSDDDVWVNDGMIPCNQSLDCREVLPIKPNSVDPPRESELDSVE. Residue N118 is glycosylated (N-linked (GlcNAc...) asparagine). The tract at residues 147-562 is catalytic; sequence DEEIVKLVID…DIGPSSQVNR (416 aa). E240 serves as the catalytic Charge relay system. N304 carries an N-linked (GlcNAc...) asparagine glycan. Catalysis depends on charge relay system residues K372 and D448. Residue H544 is the Proton donor of the active site. A glycan (N-linked (GlcNAc...) asparagine) is linked at N548. S550 bears the Phosphoserine mark.

Belongs to the HMG-CoA reductase family. As to expression, restricted to young seedlings, roots, and inflorescences. Expressed in root tips, shoot apex, secretory zone of the stigma, microspores, mature pollen grains, gynoecium vascular tissue and fertilized ovules.

The protein localises to the endoplasmic reticulum membrane. It carries out the reaction (R)-mevalonate + 2 NADP(+) + CoA = (3S)-3-hydroxy-3-methylglutaryl-CoA + 2 NADPH + 2 H(+). It functions in the pathway metabolic intermediate biosynthesis; (R)-mevalonate biosynthesis; (R)-mevalonate from acetyl-CoA: step 3/3. Its activity is regulated as follows. Regulated at the post-translational level in response to alterations of the sphingolipid and the sterol biosynthetic pathways. Its function is as follows. Catalyzes the synthesis of mevalonate. The specific precursor of all isoprenoid compounds present in plants. The protein is 3-hydroxy-3-methylglutaryl-coenzyme A reductase 2 (HMG2) of Arabidopsis thaliana (Mouse-ear cress).